Reading from the N-terminus, the 435-residue chain is uncharacterized protein (435 aa).

Glutamine 261, tyrosine 294, glutamate 318, and aspartate 366 together coordinate S-adenosyl-L-methionine. Cysteine 393 functions as the Nucleophile in the catalytic mechanism.

Belongs to the class I-like SAM-binding methyltransferase superfamily. RNA M5U methyltransferase family.

This is an uncharacterized protein from Bifidobacterium longum (strain NCC 2705).